Consider the following 165-residue polypeptide: UPF0669 protein v1g209471 (165 aa).

A signal peptide spans 1–23; it reads MQGRYSAPLFLLLWLFFLHGTLC. Residue Asn38 is glycosylated (N-linked (GlcNAc...) asparagine).

It belongs to the UPF0669 family.

The protein localises to the secreted. This is UPF0669 protein v1g209471 from Nematostella vectensis (Starlet sea anemone).